The following is a 386-amino-acid chain: 23S rRNA (uracil(747)-C(5))-methyltransferase RlmC (386 aa).

Residues C7, C15, C18, and C94 each coordinate [4Fe-4S] cluster. Positions 219, 248, 269, and 316 each coordinate S-adenosyl-L-methionine. C343 serves as the catalytic Nucleophile.

It belongs to the class I-like SAM-binding methyltransferase superfamily. RNA M5U methyltransferase family. RlmC subfamily.

The enzyme catalyses uridine(747) in 23S rRNA + S-adenosyl-L-methionine = 5-methyluridine(747) in 23S rRNA + S-adenosyl-L-homocysteine + H(+). Functionally, catalyzes the formation of 5-methyl-uridine at position 747 (m5U747) in 23S rRNA. This Shewanella oneidensis (strain ATCC 700550 / JCM 31522 / CIP 106686 / LMG 19005 / NCIMB 14063 / MR-1) protein is 23S rRNA (uracil(747)-C(5))-methyltransferase RlmC.